A 232-amino-acid chain; its full sequence is Ubiquinone biosynthesis O-methyltransferase (232 aa).

S-adenosyl-L-methionine is bound by residues arginine 36, glycine 55, aspartate 76, and methionine 120.

Belongs to the methyltransferase superfamily. UbiG/COQ3 family.

It carries out the reaction a 3-demethylubiquinol + S-adenosyl-L-methionine = a ubiquinol + S-adenosyl-L-homocysteine + H(+). The enzyme catalyses a 3-(all-trans-polyprenyl)benzene-1,2-diol + S-adenosyl-L-methionine = a 2-methoxy-6-(all-trans-polyprenyl)phenol + S-adenosyl-L-homocysteine + H(+). It functions in the pathway cofactor biosynthesis; ubiquinone biosynthesis. Its function is as follows. O-methyltransferase that catalyzes the 2 O-methylation steps in the ubiquinone biosynthetic pathway. The chain is Ubiquinone biosynthesis O-methyltransferase from Burkholderia ambifaria (strain MC40-6).